The sequence spans 287 residues: 1-acyl-sn-glycerol-3-phosphate acyltransferase alpha (287 aa).

The first 26 residues, 1 to 26 (MELWPGAGTLLLLLFLLLLLLLPTLW), serve as a signal peptide directing secretion. Residues 27–37 (FCSPSAKYFFK) are Lumenal-facing. A helical membrane pass occupies residues 38-58 (MAFYNGWILFLAVLAIPVCAV). The Cytoplasmic portion of the chain corresponds to 59–127 (RGRNVENMKI…PGHCVPIAKR (69 aa)). Positions 104–109 (HQSSLD) match the HXXXXD motif motif. The helical transmembrane segment at 128-148 (ELLWAGSAGLACWLAGVIFID) threads the bilayer. Residues 149 to 192 (RKRTGDAISVMSEVAQTLLTQDVRVWVFPEGTRNHNGSMLPFKR) are Lumenal-facing. An EGTR motif motif is present at residues 178-181 (EGTR).

The protein belongs to the 1-acyl-sn-glycerol-3-phosphate acyltransferase family.

It is found in the endoplasmic reticulum membrane. It carries out the reaction a 1-acyl-sn-glycero-3-phosphate + an acyl-CoA = a 1,2-diacyl-sn-glycero-3-phosphate + CoA. The catalysed reaction is 1-(9Z-octadecenoyl)-sn-glycero-3-phosphate + (9Z)-octadecenoyl-CoA = 1,2-di-(9Z-octadecenoyl)-sn-glycero-3-phosphate + CoA. The enzyme catalyses 1-(9Z-octadecenoyl)-sn-glycero-3-phosphate + hexadecanoyl-CoA = 1-(9Z)-octadecenoyl-2-hexadecanoyl-sn-glycero-3-phosphate + CoA. It catalyses the reaction heptadecanoyl-CoA + 1-(9Z-octadecenoyl)-sn-glycero-3-phosphate = 1-(9Z)-octadecenoyl-2-heptadecanoyl-sn-glycero-3-phosphate + CoA. It carries out the reaction 1-(9Z-octadecenoyl)-sn-glycero-3-phosphate + octadecanoyl-CoA = 1-(9Z-octadecenoyl)-2-octadecanoyl-sn-glycero-3-phosphate + CoA. The catalysed reaction is 1-(9Z-octadecenoyl)-sn-glycero-3-phosphate + (9Z,12Z)-octadecadienoyl-CoA = 1-(9Z)-octadecenoyl-2-(9Z,12Z)-octadecadienoyl-sn-glycero-3-phosphate + CoA. The enzyme catalyses 1-(9Z-octadecenoyl)-sn-glycero-3-phosphate + tetradecanoyl-CoA = 1-(9Z)-octadecenoyl-2-tetradecanoyl-sn-glycero-3-phosphate + CoA. It catalyses the reaction pentadecanoyl-CoA + 1-(9Z-octadecenoyl)-sn-glycero-3-phosphate = 1-(9Z)-octadecenoyl-2-pentadecanoyl-sn-glycero-3-phosphate + CoA. It carries out the reaction 1-hexadecanoyl-sn-glycero-3-phosphate + (9Z)-octadecenoyl-CoA = 1-hexadecanoyl-2-(9Z-octadecenoyl)-sn-glycero-3-phosphate + CoA. The catalysed reaction is 1-(9Z,12Z,15Z)-octadecatrienoyl-sn-glycero-3-phosphate + (9Z)-octadecenoyl-CoA = 1-(9Z,12Z,15Z)-octadecatrienoyl-2-(9Z)-octadecenoyl-sn-glycero-3-phosphate + CoA. The enzyme catalyses 1-(6Z,9Z,12Z-octadecatrienoyl)-sn-glycero-3-phosphate + (9Z)-octadecenoyl-CoA = (6Z,9Z,12Z)-octadecatrienoyl-2-(9Z)-octadecenoyl-sn-glycero-3-phosphate + CoA. It catalyses the reaction 1-eicosanoyl-sn-glycero-3-phosphate + (9Z)-octadecenoyl-CoA = 1-eicosanoyl-2-(9Z)-octadecenoyl-sn-glycero-3-phosphate + CoA. It carries out the reaction 1-tetradecanoyl-sn-glycerol 3-phosphate + (9Z)-octadecenoyl-CoA = 1-tetradecanoyl-2-(9Z)-octadecenoyl-sn-glycero-3-phosphate + CoA. The catalysed reaction is 1-(9Z-octadecenoyl)-sn-glycero-3-phosphate + (5Z,8Z,11Z,14Z)-eicosatetraenoyl-CoA = 1-(9Z)-octadecenoyl-2-(5Z,8Z,11Z,14Z)-eicosatetraenoyl-sn-glycero-3-phosphate + CoA. The enzyme catalyses 1-(9Z-octadecenoyl)-sn-glycero-3-phosphate + dodecanoyl-CoA = 1-(9Z)-octadecenoyl-2-dodecanoyl-sn-glycero-3-phosphate + CoA. It catalyses the reaction (6Z)-octadecenoyl-CoA + 1-(9Z-octadecenoyl)-sn-glycero-3-phosphate = 1-(9Z)-octadecenoyl-2-(6Z)-octadecenoyl-sn-glycero-3-phosphate + CoA. It carries out the reaction (11Z)-octadecenoyl-CoA + 1-(9Z-octadecenoyl)-sn-glycero-3-phosphate = 1-(9Z)-octadecenoyl-2-(11Z)-octadecenoyl-sn-glycero-3-phosphate + CoA. The catalysed reaction is (9Z)-hexadecenoyl-CoA + 1-(9Z-octadecenoyl)-sn-glycero-3-phosphate = 1-(9Z-octadecenoyl)-2-(9Z-hexadecenoyl)-sn-glycero-3-phosphate + CoA. It participates in phospholipid metabolism; CDP-diacylglycerol biosynthesis; CDP-diacylglycerol from sn-glycerol 3-phosphate: step 2/3. Converts 1-acyl-sn-glycerol-3-phosphate (lysophosphatidic acid or LPA) into 1,2-diacyl-sn-glycerol-3-phosphate (phosphatidic acid or PA) by incorporating an acyl moiety at the sn-2 position of the glycerol backbone. The protein is 1-acyl-sn-glycerol-3-phosphate acyltransferase alpha (AGPAT1) of Ovis aries (Sheep).